The primary structure comprises 94 residues: MRWLTVGLLAAIGLLQYPLWVGKGGWLKVWEYDRQLQQQKEVTRKLEIRNAGLDAEVRDLKQGYDAIEERARFELGMVKQDETFVQIPEKVPGK.

Over 1–3 (MRW) the chain is Cytoplasmic. Residues 4–21 (LTVGLLAAIGLLQYPLWV) traverse the membrane as a helical segment. Residues 22–94 (GKGGWLKVWE…VQIPEKVPGK (73 aa)) are Periplasmic-facing. The stretch at 31–73 (EYDRQLQQQKEVTRKLEIRNAGLDAEVRDLKQGYDAIEERARF) forms a coiled coil.

It belongs to the FtsB family. As to quaternary structure, part of a complex composed of FtsB, FtsL and FtsQ.

It is found in the cell inner membrane. Its function is as follows. Essential cell division protein. May link together the upstream cell division proteins, which are predominantly cytoplasmic, with the downstream cell division proteins, which are predominantly periplasmic. This is Cell division protein FtsB from Dechloromonas aromatica (strain RCB).